Consider the following 295-residue polypeptide: NAD kinase (295 aa).

Residue aspartate 72 is the Proton acceptor of the active site. NAD(+)-binding positions include 72 to 73 (DG), 146 to 147 (ND), arginine 157, lysine 174, aspartate 176, 187 to 192 (TAYALS), and glutamine 247.

This sequence belongs to the NAD kinase family. Requires a divalent metal cation as cofactor.

The protein localises to the cytoplasm. It catalyses the reaction NAD(+) + ATP = ADP + NADP(+) + H(+). Involved in the regulation of the intracellular balance of NAD and NADP, and is a key enzyme in the biosynthesis of NADP. Catalyzes specifically the phosphorylation on 2'-hydroxyl of the adenosine moiety of NAD to yield NADP. In Ectopseudomonas mendocina (strain ymp) (Pseudomonas mendocina), this protein is NAD kinase.